The primary structure comprises 671 residues: DNA ligase (671 aa).

Residues 32-36 (DAEYD), 81-82 (SL), and E113 contribute to the NAD(+) site. The active-site N6-AMP-lysine intermediate is K115. Residues R136, E173, K290, and K314 each contribute to the NAD(+) site. 4 residues coordinate Zn(2+): C408, C411, C426, and C432. A BRCT domain is found at 593–671 (EIDSPFAGKT…ETEMLHLLGS (79 aa)).

It belongs to the NAD-dependent DNA ligase family. LigA subfamily. The cofactor is Mg(2+). Mn(2+) serves as cofactor.

It carries out the reaction NAD(+) + (deoxyribonucleotide)n-3'-hydroxyl + 5'-phospho-(deoxyribonucleotide)m = (deoxyribonucleotide)n+m + AMP + beta-nicotinamide D-nucleotide.. DNA ligase that catalyzes the formation of phosphodiester linkages between 5'-phosphoryl and 3'-hydroxyl groups in double-stranded DNA using NAD as a coenzyme and as the energy source for the reaction. It is essential for DNA replication and repair of damaged DNA. This Escherichia coli O6:K15:H31 (strain 536 / UPEC) protein is DNA ligase.